We begin with the raw amino-acid sequence, 286 residues long: 4-diphosphocytidyl-2-C-methyl-D-erythritol kinase (286 aa).

K11 is an active-site residue. 94–104 (PMGGGIGGGSS) contacts ATP. Residue D136 is part of the active site.

The protein belongs to the GHMP kinase family. IspE subfamily.

The enzyme catalyses 4-CDP-2-C-methyl-D-erythritol + ATP = 4-CDP-2-C-methyl-D-erythritol 2-phosphate + ADP + H(+). It functions in the pathway isoprenoid biosynthesis; isopentenyl diphosphate biosynthesis via DXP pathway; isopentenyl diphosphate from 1-deoxy-D-xylulose 5-phosphate: step 3/6. Functionally, catalyzes the phosphorylation of the position 2 hydroxy group of 4-diphosphocytidyl-2C-methyl-D-erythritol. The sequence is that of 4-diphosphocytidyl-2-C-methyl-D-erythritol kinase from Pseudomonas putida (strain W619).